Reading from the N-terminus, the 141-residue chain is Hemoglobin subunit alpha (141 aa).

The Globin domain maps to 1–141 (VLSDNDKTNV…VSTVLTSKYR (141 aa)). Position 3 is a phosphoserine (Ser-3). Lys-7 carries the N6-succinyllysine modification. Residue Thr-8 is modified to Phosphothreonine. At Lys-11 the chain carries N6-succinyllysine. N6-acetyllysine; alternate is present on Lys-16. Lys-16 is subject to N6-succinyllysine; alternate. A Phosphotyrosine modification is found at Tyr-24. Ser-35 carries the post-translational modification Phosphoserine. Residue Lys-40 is modified to N6-succinyllysine. O2 is bound at residue His-58. His-87 is a binding site for heme b. Ser-102 is modified (phosphoserine). At Thr-108 the chain carries Phosphothreonine. At Ser-124 the chain carries Phosphoserine. Phosphothreonine occurs at positions 134 and 137. Ser-138 carries the post-translational modification Phosphoserine.

It belongs to the globin family. As to quaternary structure, heterotetramer of two alpha chains and two beta chains. As to expression, red blood cells.

Functionally, involved in oxygen transport from the lung to the various peripheral tissues. Its function is as follows. Hemopressin acts as an antagonist peptide of the cannabinoid receptor CNR1. Hemopressin-binding efficiently blocks cannabinoid receptor CNR1 and subsequent signaling. The sequence is that of Hemoglobin subunit alpha (HBA) from Loxodonta africana (African elephant).